Reading from the N-terminus, the 1455-residue chain is Fanconi anemia group A protein (1455 aa).

The Nuclear localization signal signature appears at 18-34 (RRRAWAELLAGRVKREK). At serine 1449 the chain carries Phosphoserine.

In terms of assembly, belongs to the multisubunit FA complex composed of FANCA, FANCB, FANCC, FANCE, FANCF, FANCG, FANCL/PHF9 and FANCM. The complex is not found in FA patients. In complex with FANCF, FANCG and FANCL, but not with FANCC, nor FANCE, interacts with HES1; this interaction may be essential for the stability and nuclear localization of FA core complex proteins. The complex with FANCC and FANCG may also include EIF2AK2 and HSP70. Interacts with FAAP20/C1orf86; interaction is direct. In terms of processing, phosphorylation is required for the formation of the nuclear complex. Not phosphorylated in cells derived from groups A, B, C, E, F, G, and H.

The protein resides in the nucleus. It localises to the cytoplasm. In terms of biological role, DNA repair protein that may operate in a postreplication repair or a cell cycle checkpoint function. May be involved in interstrand DNA cross-link repair and in the maintenance of normal chromosome stability. The protein is Fanconi anemia group A protein (FANCA) of Homo sapiens (Human).